Here is a 135-residue protein sequence, read N- to C-terminus: CDGSH iron-sulfur domain-containing protein 2A (135 aa).

Residues 1-37 (MVLETISRIIKIQLPAYLKKLPLPETIGGFARLTVSE) lie on the Lumenal side of the membrane. A helical membrane pass occupies residues 38–60 (WLRLLPLLGILALLGYLTIRPFL). Residues 61–135 (PKKKKQKDSL…GPLILKKKIL (75 aa)) are Cytoplasmic-facing. 4 residues coordinate [2Fe-2S] cluster: C99, C101, C110, and H114.

It belongs to the CISD protein family. CISD2 subfamily. As to quaternary structure, homodimer. Requires [2Fe-2S] cluster as cofactor.

It localises to the endoplasmic reticulum membrane. Its subcellular location is the mitochondrion outer membrane. In terms of biological role, regulator of autophagy that contributes to antagonize becn1-mediated cellular autophagy at the endoplasmic reticulum. Participates in the interaction of bcl2 with becn1 and is required for bcl2-mediated depression of endoplasmic reticulum Ca(2+) stores during autophagy. This is CDGSH iron-sulfur domain-containing protein 2A (cisd2a) from Salmo salar (Atlantic salmon).